A 551-amino-acid chain; its full sequence is Arginine--tRNA ligase (551 aa).

The 'HIGH' region signature appears at Ala125–His135.

This sequence belongs to the class-I aminoacyl-tRNA synthetase family. As to quaternary structure, monomer.

The protein resides in the cytoplasm. The catalysed reaction is tRNA(Arg) + L-arginine + ATP = L-arginyl-tRNA(Arg) + AMP + diphosphate. The sequence is that of Arginine--tRNA ligase from Nitratidesulfovibrio vulgaris (strain ATCC 29579 / DSM 644 / CCUG 34227 / NCIMB 8303 / VKM B-1760 / Hildenborough) (Desulfovibrio vulgaris).